The primary structure comprises 540 residues: Putative sel1-like repeat-containing protein R815 (540 aa).

Sel1-like repeat units follow at residues 129-164 (IDAQ…YKEN), 165-200 (LFGL…KHNY), 201-236 (PAVK…NQGY), 237-272 (PLAQ…NNGC), 273-308 (LYAT…SENY), and 309-344 (LLAI…NSTK).

The sequence is that of Putative sel1-like repeat-containing protein R815 from Acanthamoeba polyphaga (Amoeba).